The chain runs to 427 residues: Transcobalamin-2 (427 aa).

An N-terminal signal peptide occupies residues 1 to 18 (MRHLGAFLFLLGVLGALT). Intrachain disulfides connect C21-C267, C83-C96, C116-C309, and C165-C205. Cob(II)alamin is bound by residues Q104, 152 to 156 (TSYYQ), H190, 190 to 194 (HHSVD), N242, S245, Q291, and 395 to 397 (WQL).

The protein belongs to the eukaryotic cobalamin transport proteins family. As to quaternary structure, interacts with CD320 (via LDL-receptor class A domains).

It is found in the secreted. Primary vitamin B12-binding and transport protein. Delivers cobalamin to cells. The protein is Transcobalamin-2 (TCN2) of Homo sapiens (Human).